Consider the following 101-residue polypeptide: Protein Tat (101 aa).

Positions 1 to 24 (MDPVDPNLEPWNHPGSQPKTPCNK) are interaction with human CREBBP. The tract at residues 1–48 (MDPVDPNLEPWNHPGSQPKTPCNKCFCKVCCWHCQVCFLNKGLGISYG) is transactivation. Residues Cys22, Cys25, and Cys27 each contribute to the Zn(2+) site. The segment at 22–37 (CNKCFCKVCCWHCQVC) is cysteine-rich. Lys28 is subject to N6-acetyllysine; by host PCAF. Cys30, His33, Cys34, and Cys37 together coordinate Zn(2+). A core region spans residues 38–48 (FLNKGLGISYG). Over residues 48 to 57 (GRKKRKHRRG) the composition is skewed to basic residues. Residues 48–101 (GRKKRKHRRGTPQSSKGHQDPVPKQPLPTTRGNPTGPKESKKEVASKAEADQCD) form a disordered region. Residues 49-57 (RKKRKHRRG) carry the Nuclear localization signal, RNA-binding (TAR), and protein transduction motif. Residues 49–86 (RKKRKHRRGTPQSSKGHQDPVPKQPLPTTRGNPTGPKE) are interaction with the host capping enzyme RNGTT. Residues Lys50 and Lys51 each carry the N6-acetyllysine; by host EP300 and GCN5L2 modification. Position 52 is an asymmetric dimethylarginine; by host PRMT6 (Arg52). Lys71 is covalently cross-linked (Glycyl lysine isopeptide (Lys-Gly) (interchain with G-Cter in ubiquitin)). Positions 85 to 101 (KESKKEVASKAEADQCD) are enriched in basic and acidic residues.

It belongs to the lentiviruses Tat family. In terms of assembly, interacts with host CCNT1. Associates with the P-TEFb complex composed at least of Tat, P-TEFb (CDK9 and CCNT1), TAR RNA, RNA Pol II. Recruits the HATs CREBBP, TAF1/TFIID, EP300, PCAF and GCN5L2. Interacts with host KAT5/Tip60; this interaction targets the latter to degradation. Interacts with the host deacetylase SIRT1. Interacts with host capping enzyme RNGTT; this interaction stimulates RNGTT. Binds to host KDR, and to the host integrins ITGAV/ITGB3 and ITGA5/ITGB1. Interacts with host KPNB1/importin beta-1 without previous binding to KPNA1/importin alpha-1. Interacts with EIF2AK2. Interacts with host nucleosome assembly protein NAP1L1; this interaction may be required for the transport of Tat within the nucleus, since the two proteins interact at the nuclear rim. Interacts with host C1QBP/SF2P32; this interaction involves lysine-acetylated Tat. Interacts with the host chemokine receptors CCR2, CCR3 and CXCR4. Interacts with host DPP4/CD26; this interaction may trigger an anti-proliferative effect. Interacts with host LDLR. Interacts with the host extracellular matrix metalloproteinase MMP1. Interacts with host PRMT6; this interaction mediates Tat's methylation. Interacts with, and is ubiquitinated by MDM2/Hdm2. Interacts with host PSMC3 and HTATIP2. Interacts with STAB1; this interaction may overcome SATB1-mediated repression of IL2 and IL2RA (interleukin) in T cells by binding to the same domain than HDAC1. Interacts (when acetylated) with human CDK13, thereby increasing HIV-1 mRNA splicing and promoting the production of the doubly spliced HIV-1 protein Nef. Interacts with host TBP; this interaction modulates the activity of transcriptional pre-initiation complex. Interacts with host RELA. Interacts with host PLSCR1; this interaction negatively regulates Tat transactivation activity by altering its subcellular distribution. In terms of processing, asymmetrical arginine methylation by host PRMT6 seems to diminish the transactivation capacity of Tat and affects the interaction with host CCNT1. Acetylation by EP300, CREBBP, GCN5L2/GCN5 and PCAF regulates the transactivation activity of Tat. EP300-mediated acetylation of Lys-50 promotes dissociation of Tat from the TAR RNA through the competitive binding to PCAF's bromodomain. In addition, the non-acetylated Tat's N-terminus can also interact with PCAF. PCAF-mediated acetylation of Lys-28 enhances Tat's binding to CCNT1. Lys-50 is deacetylated by SIRT1. Post-translationally, polyubiquitination by host MDM2 does not target Tat to degradation, but activates its transactivation function and fosters interaction with CCNT1 and TAR RNA. In terms of processing, phosphorylated by EIF2AK2 on serine and threonine residues adjacent to the basic region important for TAR RNA binding and function. Phosphorylation of Tat by EIF2AK2 is dependent on the prior activation of EIF2AK2 by dsRNA.

It localises to the host nucleus. The protein localises to the host nucleolus. Its subcellular location is the host cytoplasm. It is found in the secreted. Its function is as follows. Transcriptional activator that increases RNA Pol II processivity, thereby increasing the level of full-length viral transcripts. Recognizes a hairpin structure at the 5'-LTR of the nascent viral mRNAs referred to as the transactivation responsive RNA element (TAR) and recruits the cyclin T1-CDK9 complex (P-TEFb complex) that will in turn hyperphosphorylate the RNA polymerase II to allow efficient elongation. The CDK9 component of P-TEFb and other Tat-activated kinases hyperphosphorylate the C-terminus of RNA Pol II that becomes stabilized and much more processive. Other factors such as HTATSF1/Tat-SF1, SUPT5H/SPT5, and HTATIP2 are also important for Tat's function. Besides its effect on RNA Pol II processivity, Tat induces chromatin remodeling of proviral genes by recruiting the histone acetyltransferases (HATs) CREBBP, EP300 and PCAF to the chromatin. This also contributes to the increase in proviral transcription rate, especially when the provirus integrates in transcriptionally silent region of the host genome. To ensure maximal activation of the LTR, Tat mediates nuclear translocation of NF-kappa-B by interacting with host RELA. Through its interaction with host TBP, Tat may also modulate transcription initiation. Tat can reactivate a latently infected cell by penetrating in it and transactivating its LTR promoter. In the cytoplasm, Tat is thought to act as a translational activator of HIV-1 mRNAs. Extracellular circulating Tat can be endocytosed by surrounding uninfected cells via the binding to several surface receptors such as CD26, CXCR4, heparan sulfate proteoglycans (HSPG) or LDLR. Neurons are rarely infected, but they internalize Tat via their LDLR. Through its interaction with nuclear HATs, Tat is potentially able to control the acetylation-dependent cellular gene expression. Modulates the expression of many cellular genes involved in cell survival, proliferation or in coding for cytokines or cytokine receptors. Tat plays a role in T-cell and neurons apoptosis. Tat induced neurotoxicity and apoptosis probably contribute to neuroAIDS. Circulating Tat also acts as a chemokine-like and/or growth factor-like molecule that binds to specific receptors on the surface of the cells, affecting many cellular pathways. In the vascular system, Tat binds to ITGAV/ITGB3 and ITGA5/ITGB1 integrins dimers at the surface of endothelial cells and competes with bFGF for heparin-binding sites, leading to an excess of soluble bFGF. The chain is Protein Tat from Homo sapiens (Human).